The primary structure comprises 282 residues: Undecaprenyl-diphosphatase (282 aa).

7 helical membrane passes run 40-60 (GAAFTAIIQIGTLAAVLMYFW), 85-105 (ARMGWMIAAGTIPIVVFGLLF), 115-135 (SLYWISGALIGLALLLSLAEW), 153-173 (IGWKEALLIGLAQSIALIPGS), 193-213 (AARFSFLLSLPAVFAAGIFQL), 230-250 (LAAATFTSAVVGYLSIAFLLS), and 258-278 (TIFIIYRLLAGILLLLLLSTG).

It belongs to the UppP family.

The protein resides in the cell inner membrane. It carries out the reaction di-trans,octa-cis-undecaprenyl diphosphate + H2O = di-trans,octa-cis-undecaprenyl phosphate + phosphate + H(+). In terms of biological role, catalyzes the dephosphorylation of undecaprenyl diphosphate (UPP). Confers resistance to bacitracin. The sequence is that of Undecaprenyl-diphosphatase from Chlorobium phaeovibrioides (strain DSM 265 / 1930) (Prosthecochloris vibrioformis (strain DSM 265)).